The following is a 300-amino-acid chain: Pantoate kinase (300 aa).

This sequence belongs to the GHMP kinase family. PoK subfamily. As to quaternary structure, homodimer.

It catalyses the reaction (R)-pantoate + ATP = (R)-4-phosphopantoate + ADP + H(+). Its pathway is cofactor biosynthesis; coenzyme A biosynthesis. With respect to regulation, moderately stimulated in the presence of potassium cations. Inhibited by increasing concentrations of pantoate. Activity is not affected by CoA/acetyl-CoA. Functionally, phosphorylates (R)-pantoate to form (R)-4-phosphopantoate in the CoA biosynthesis pathway. Displays broad nucleotide specificity and utilizes ATP, GTP, UTP, and CTP with comparable catalytic efficiencies. This chain is Pantoate kinase, found in Thermococcus kodakarensis (strain ATCC BAA-918 / JCM 12380 / KOD1) (Pyrococcus kodakaraensis (strain KOD1)).